The following is a 170-amino-acid chain: Opacity-related protein POPM3 (170 aa).

Belongs to the opacity porin family.

The protein localises to the cell outer membrane. In Neisseria meningitidis serogroup C, this protein is Opacity-related protein POPM3 (opr).